The primary structure comprises 453 residues: Tyrosine-protein phosphatase non-receptor type 18 (453 aa).

Residues 26 to 291 enclose the Tyrosine-protein phosphatase domain; sequence LAREFSDIKA…RFLYHTVAQL (266 aa). Substrate-binding positions include Asp197, 229–235, and Gln276; that span reads CSAGCGR. Cys229 acts as the Phosphocysteine intermediate in catalysis. Phosphotyrosine occurs at positions 381 and 419. The tract at residues 384 to 453 is disordered; sequence VAPRAQRPVA…RDPPAEWTRV (70 aa). Over residues 442–453 the composition is skewed to basic and acidic residues; that stretch reads GPRDPPAEWTRV.

The protein belongs to the protein-tyrosine phosphatase family. Non-receptor class 4 subfamily. In terms of assembly, interacts with PSTPIP1. Highest expression in bone marrow. Also expressed in kidney, lung, ovary, spleen, thymus and lymph node.

It is found in the nucleus. The protein localises to the cytoplasm. It catalyses the reaction O-phospho-L-tyrosyl-[protein] + H2O = L-tyrosyl-[protein] + phosphate. May be involved in growth and differentiation of hematopoietic cells. This chain is Tyrosine-protein phosphatase non-receptor type 18 (Ptpn18), found in Mus musculus (Mouse).